Reading from the N-terminus, the 176-residue chain is Ribosome rescue factor SmrB (176 aa).

Residues 98–173 (LDVHGLNQDQ…RSTAILFLIH (76 aa)) enclose the Smr domain.

Belongs to the SmrB family. As to quaternary structure, associates with collided ribosomes, but not with correctly translating polysomes.

Functionally, acts as a ribosome collision sensor. Detects stalled/collided disomes (pairs of ribosomes where the leading ribosome is stalled and a second ribosome has collided with it) and endonucleolytically cleaves mRNA at the 5' boundary of the stalled ribosome. Stalled/collided disomes form a new interface (primarily via the 30S subunits) that binds SmrB. Cleaved mRNA becomes available for tmRNA ligation, leading to ribosomal subunit dissociation and rescue of stalled ribosomes. This Buchnera aphidicola subsp. Baizongia pistaciae (strain Bp) protein is Ribosome rescue factor SmrB.